We begin with the raw amino-acid sequence, 336 residues long: Sulfate/thiosulfate import ATP-binding protein CysA (336 aa).

The ABC transporter domain occupies 3–233; the sequence is ITIENVSKSF…PASPFVMSFI (231 aa). An ATP-binding site is contributed by 35 to 42; the sequence is GPSGSGKS.

It belongs to the ABC transporter superfamily. Sulfate/tungstate importer (TC 3.A.1.6) family. As to quaternary structure, the complex is composed of two ATP-binding proteins (CysA), two transmembrane proteins (CysT and CysW) and a solute-binding protein (CysP).

It localises to the cell inner membrane. The catalysed reaction is sulfate(out) + ATP + H2O = sulfate(in) + ADP + phosphate + H(+). It catalyses the reaction thiosulfate(out) + ATP + H2O = thiosulfate(in) + ADP + phosphate + H(+). In terms of biological role, part of the ABC transporter complex CysAWTP involved in sulfate/thiosulfate import. Responsible for energy coupling to the transport system. This Thermosynechococcus vestitus (strain NIES-2133 / IAM M-273 / BP-1) protein is Sulfate/thiosulfate import ATP-binding protein CysA.